An 82-amino-acid chain; its full sequence is uncharacterized protein (82 aa).

Could be a silencing control element for the regulation of the restriction system. This is an uncharacterized protein from Herpetosiphon aurantiacus (Herpetosiphon giganteus).